A 195-amino-acid chain; its full sequence is MYLGRFIIIGETTAVYRVSSRSYPNRQIISRDNMLTVVPTSEAAQTNNPYVSYNCMRQGGEKIVIGNGSHVDPIAEKIDRGYPARDALAEALLALDYEKDDYNTPRIAGIVGSSSYVGIIRQDAVIIRSISEPTLVSTYENDAPTTAQLSLKGDIEEIAQKAYELEYEHPVCAAAVTHQGQGESGDIVAQIYNGK.

Belongs to the archaeal IMP cyclohydrolase family.

The catalysed reaction is IMP + H2O = 5-formamido-1-(5-phospho-D-ribosyl)imidazole-4-carboxamide. It participates in purine metabolism; IMP biosynthesis via de novo pathway; IMP from 5-formamido-1-(5-phospho-D-ribosyl)imidazole-4-carboxamide: step 1/1. Its function is as follows. Catalyzes the cyclization of 5-formylamidoimidazole-4-carboxamide ribonucleotide to IMP. The sequence is that of IMP cyclohydrolase from Haloquadratum walsbyi (strain DSM 16790 / HBSQ001).